The chain runs to 727 residues: Beta-galactosidase 2 (727 aa).

Positions Met1–Ala27 are cleaved as a signal peptide. Catalysis depends on Glu185, which acts as the Proton donor. Glu254 functions as the Nucleophile in the catalytic mechanism. Asn255 carries N-linked (GlcNAc...) asparagine glycosylation.

This sequence belongs to the glycosyl hydrolase 35 family. Ubiquitous, with higher expression levels in roots and siliques.

The protein localises to the secreted. The protein resides in the extracellular space. It is found in the apoplast. It catalyses the reaction Hydrolysis of terminal non-reducing beta-D-galactose residues in beta-D-galactosides.. This chain is Beta-galactosidase 2 (BGAL2), found in Arabidopsis thaliana (Mouse-ear cress).